An 898-amino-acid chain; its full sequence is Methionine--tRNA ligase, cytoplasmic (898 aa).

A GST C-terminal domain is found at 74–198 (GWEQDDLTNQ…VLKQQGVLAL (125 aa)). The short motif at 273-283 (PYVNNVPHLGN) is the 'HIGH' region element. A 'KMSKS' region motif is present at residues 593–597 (KFSKS). Residue lysine 596 participates in ATP binding. Serine 825 carries the post-translational modification Phosphoserine. A Phosphothreonine modification is found at threonine 833. The WHEP-TRS domain maps to 839-895 (QIQALTEEVTKQGNIVRELKAQKADKNQIAAEVAKLLDLKKQLALAEGKPLETSKGK).

It belongs to the class-I aminoacyl-tRNA synthetase family. In terms of assembly, monomer. Part of a multisubunit complex that groups tRNA ligases for Arg (RARS1), Asp (DARS1), Gln (QARS1), Ile (IARS1), Leu (LARS1), Lys (KARS1), Met (MARS1) the bifunctional ligase for Glu and Pro (EPRS1) and the auxiliary subunits AIMP1/p43, AIMP2/p38 and EEF1E1/p18. Forms a linear complex that contains MARS1, EEF1E1, EPRS1 and AIMP2 that is at the core of the multisubunit complex.

It is found in the cytoplasm. It localises to the cytosol. The protein localises to the nucleus. Its subcellular location is the nucleolus. The catalysed reaction is tRNA(Met) + L-methionine + ATP = L-methionyl-tRNA(Met) + AMP + diphosphate. Functionally, catalyzes the specific attachment of an amino acid to its cognate tRNA in a 2 step reaction: the amino acid (AA) is first activated by ATP to form AA-AMP and then transferred to the acceptor end of the tRNA. Plays a role in the synthesis of ribosomal RNA in the nucleolus. This chain is Methionine--tRNA ligase, cytoplasmic (MARS1), found in Bos taurus (Bovine).